Here is a 277-residue protein sequence, read N- to C-terminus: Large ribosomal subunit protein uL2 (277 aa).

The disordered stretch occupies residues 223-261 (SVMNPNDHPHGGGEGKSPVGRPSPVTPWGKPALGYKTRK).

The protein belongs to the universal ribosomal protein uL2 family. Part of the 50S ribosomal subunit. Forms a bridge to the 30S subunit in the 70S ribosome.

In terms of biological role, one of the primary rRNA binding proteins. Required for association of the 30S and 50S subunits to form the 70S ribosome, for tRNA binding and peptide bond formation. It has been suggested to have peptidyltransferase activity; this is somewhat controversial. Makes several contacts with the 16S rRNA in the 70S ribosome. The chain is Large ribosomal subunit protein uL2 from Clostridium botulinum (strain Alaska E43 / Type E3).